The chain runs to 556 residues: Formate--tetrahydrofolate ligase (556 aa).

Residue 65–72 (TPAGEGKS) coordinates ATP.

It belongs to the formate--tetrahydrofolate ligase family.

It catalyses the reaction (6S)-5,6,7,8-tetrahydrofolate + formate + ATP = (6R)-10-formyltetrahydrofolate + ADP + phosphate. It participates in one-carbon metabolism; tetrahydrofolate interconversion. In Streptococcus pneumoniae serotype 4 (strain ATCC BAA-334 / TIGR4), this protein is Formate--tetrahydrofolate ligase.